The sequence spans 319 residues: ATP-dependent 6-phosphofructokinase (319 aa).

Residue G11 participates in ATP binding. Residue 21–25 (RAVVR) coordinates ADP. ATP is bound by residues 72-73 (RC) and 102-105 (GDGS). A Mg(2+)-binding site is contributed by D103. 125-127 (TID) provides a ligand contact to substrate. Catalysis depends on D127, which acts as the Proton acceptor. R154 lines the ADP pocket. Residues R162 and 169-171 (MGR) each bind substrate. ADP-binding positions include 185–187 (GAE), R211, and 213–215 (KKH). Substrate is bound by residues E222, R243, and 249-252 (HVQR).

Belongs to the phosphofructokinase type A (PFKA) family. ATP-dependent PFK group I subfamily. Prokaryotic clade 'B1' sub-subfamily. As to quaternary structure, homotetramer. Requires Mg(2+) as cofactor.

It localises to the cytoplasm. It carries out the reaction beta-D-fructose 6-phosphate + ATP = beta-D-fructose 1,6-bisphosphate + ADP + H(+). The protein operates within carbohydrate degradation; glycolysis; D-glyceraldehyde 3-phosphate and glycerone phosphate from D-glucose: step 3/4. With respect to regulation, allosterically activated by ADP and other diphosphonucleosides, and allosterically inhibited by phosphoenolpyruvate. Its function is as follows. Catalyzes the phosphorylation of D-fructose 6-phosphate to fructose 1,6-bisphosphate by ATP, the first committing step of glycolysis. This Bacillus mycoides (strain KBAB4) (Bacillus weihenstephanensis) protein is ATP-dependent 6-phosphofructokinase.